Consider the following 1307-residue polypeptide: Cyclic nucleotide-gated channel beta-1 (1307 aa).

6 disordered regions span residues methionine 1 to alanine 101, glutamine 126 to serine 178, leucine 193 to proline 262, aspartate 320 to cysteine 458, leucine 470 to serine 625, and glutamate 648 to glutamate 681. Topologically, residues methionine 1–tyrosine 720 are cytoplasmic. The segment covering valine 43 to alanine 59 has biased composition (acidic residues). The segment covering glycine 165–aspartate 174 has biased composition (basic and acidic residues). Residues glutamine 361–arginine 386 are compositionally biased toward acidic residues. Basic and acidic residues predominate over residues glutamate 387 to lysine 406. Composition is skewed to acidic residues over residues glutamate 407–proline 451 and leucine 483–glutamate 518. Pro residues predominate over residues threonine 550 to serine 560. The interval alanine 621 to arginine 631 is calmodulin-binding CaM1. Residues isoleucine 721–tryptophan 742 traverse the membrane as a helical segment. Residues alanine 743–asparagine 751 are Extracellular-facing. Residues isoleucine 752–phenylalanine 773 traverse the membrane as a helical segment. Over glutamine 774–aspartate 788 the chain is Cytoplasmic. Residues lysine 789–cysteine 808 traverse the membrane as a helical segment. Over leucine 809–leucine 824 the chain is Extracellular. The helical transmembrane segment at leucine 825–phenylalanine 837 threads the bilayer. Residues glutamate 838–lysine 849 lie on the Cytoplasmic side of the membrane. The chain crosses the membrane as a helical span at residues alanine 850 to leucine 872. The interval alanine 850–alanine 949 is ion conduction pathway. At tyrosine 873–serine 895 the chain is on the extracellular side. 2 helical membrane-spanning segments follow: residues tyrosine 896–isoleucine 922 and valine 923–glycine 948. The Cytoplasmic segment spans residues alanine 949 to glutamate 1307. The interval alanine 952 to glutamine 1028 is C-linker. Residues leucine 1026–leucine 1130 form a cNMP-binding domain region. Positions arginine 1032–leucine 1148 are cyclic nucleotide-binding domain. Glycine 1093, glutamate 1094, serine 1096, arginine 1106, and threonine 1107 together coordinate 3',5'-cyclic GMP. Arginine 1106 lines the 3',5'-cyclic AMP pocket. Residues glutamine 1212–glutamine 1218 are calmodulin-binding CaM2. Low complexity predominate over residues glutamine 1214 to alanine 1238. Residues glutamine 1214 to glutamate 1307 form a disordered region. The span at glutamate 1250–serine 1261 shows a compositional bias: pro residues.

It belongs to the cyclic nucleotide-gated cation channel (TC 1.A.1.5) family. CNGB1 subfamily. In terms of assembly, the rod cyclic nucleotide-gated channel is a heterotetramer composed of CNGA1 and CNGB1 subunits with 3:1 stoichiometry. CNGA1:CNGB1 channel binds Ca(2+)-bound CALM1 via CaM1 and CaM2 regions of the CNGB1 subunit; this interaction modulates the affinity of the channel for cNMPs in response to intracellular Ca(2+) levels. The olfactory cyclic nucleotide-gated channel is a heterotetramer composed of CNGA2, CNGA4 and CNGB1b subunits with 2:1:1 stoichiometry. As to expression, expressed in olfactory sensory cilia (at protein level).

Its subcellular location is the cell projection. It is found in the cilium membrane. It carries out the reaction Ca(2+)(in) = Ca(2+)(out). The enzyme catalyses Na(+)(in) = Na(+)(out). It catalyses the reaction K(+)(in) = K(+)(out). The catalysed reaction is NH4(+)(in) = NH4(+)(out). It carries out the reaction Rb(+)(in) = Rb(+)(out). The enzyme catalyses Li(+)(in) = Li(+)(out). It catalyses the reaction Cs(+)(in) = Cs(+)(out). Its function is as follows. Pore-forming subunit of the rod cyclic nucleotide-gated channel. Mediates rod photoresponses at dim light converting transient changes in intracellular cGMP levels into electrical signals. In the dark, cGMP levels are high and keep the channel open enabling a steady inward current carried by Na(+) and Ca(2+) ions that leads to membrane depolarization and neurotransmitter release from synaptic terminals. Upon photon absorption cGMP levels decline leading to channel closure and membrane hyperpolarization that ultimately slows neurotransmitter release and signals the presence of light, the end point of the phototransduction cascade. Conducts cGMP- and cAMP-gated ion currents, with permeability for monovalent and divalent cations. The selectivity for Ca(2+) over Na(+) increases with cGMP concentrations, whereas the selectivity among monovalent ions is independent of the cGMP levels. Functionally, pore-forming subunit of the olfactory cyclic nucleotide-gated channel. Operates in the cilia of olfactory sensory neurons where chemical stimulation of the odorant is converted to an electrical signal. Mediates odorant-induced cAMP-dependent Ca(2+) influx triggering neuron depolarization. The rise of intracellular Ca(2+) levels potentiates the olfactory response by activating Ca(2+)-dependent Cl(-) channels, but it also serves as a negative feedback signal to desensitize the channel for rapid adaptation to odorants. This is Cyclic nucleotide-gated channel beta-1 from Rattus norvegicus (Rat).